A 99-amino-acid chain; its full sequence is Large ribosomal subunit protein uL23 (99 aa).

The protein belongs to the universal ribosomal protein uL23 family. In terms of assembly, part of the 50S ribosomal subunit. Contacts protein L29, and trigger factor when it is bound to the ribosome.

Its function is as follows. One of the early assembly proteins it binds 23S rRNA. One of the proteins that surrounds the polypeptide exit tunnel on the outside of the ribosome. Forms the main docking site for trigger factor binding to the ribosome. The chain is Large ribosomal subunit protein uL23 from Lachnospira eligens (strain ATCC 27750 / DSM 3376 / VPI C15-48 / C15-B4) (Eubacterium eligens).